We begin with the raw amino-acid sequence, 330 residues long: DNA-directed RNA polymerase subunit alpha (330 aa).

An alpha N-terminal domain (alpha-NTD) region spans residues Met1–Ser225. Positions Val237 to Asp330 are alpha C-terminal domain (alpha-CTD).

Belongs to the RNA polymerase alpha chain family. In terms of assembly, homodimer. The RNAP catalytic core consists of 2 alpha, 1 beta, 1 beta' and 1 omega subunit. When a sigma factor is associated with the core the holoenzyme is formed, which can initiate transcription.

The catalysed reaction is RNA(n) + a ribonucleoside 5'-triphosphate = RNA(n+1) + diphosphate. In terms of biological role, DNA-dependent RNA polymerase catalyzes the transcription of DNA into RNA using the four ribonucleoside triphosphates as substrates. The polypeptide is DNA-directed RNA polymerase subunit alpha (Dehalococcoides mccartyi (strain CBDB1)).